We begin with the raw amino-acid sequence, 89 residues long: Small ribosomal subunit protein uS15 (89 aa).

The protein belongs to the universal ribosomal protein uS15 family. In terms of assembly, part of the 30S ribosomal subunit. Forms a bridge to the 50S subunit in the 70S ribosome, contacting the 23S rRNA.

Its function is as follows. One of the primary rRNA binding proteins, it binds directly to 16S rRNA where it helps nucleate assembly of the platform of the 30S subunit by binding and bridging several RNA helices of the 16S rRNA. In terms of biological role, forms an intersubunit bridge (bridge B4) with the 23S rRNA of the 50S subunit in the ribosome. This chain is Small ribosomal subunit protein uS15, found in Streptococcus pneumoniae (strain P1031).